We begin with the raw amino-acid sequence, 350 residues long: Probable dual-specificity RNA methyltransferase RlmN (350 aa).

The Proton acceptor role is filled by E91. The Radical SAM core domain maps to 97 to 327 (YHHGNSVCIS…VTIRREMGRD (231 aa)). An intrachain disulfide couples C104 to C332. 3 residues coordinate [4Fe-4S] cluster: C111, C115, and C118. Residues 158–159 (GE), S190, 213–215 (SLH), and N289 contribute to the S-adenosyl-L-methionine site. The S-methylcysteine intermediate role is filled by C332.

It belongs to the radical SAM superfamily. RlmN family. It depends on [4Fe-4S] cluster as a cofactor.

It is found in the cytoplasm. It carries out the reaction adenosine(2503) in 23S rRNA + 2 reduced [2Fe-2S]-[ferredoxin] + 2 S-adenosyl-L-methionine = 2-methyladenosine(2503) in 23S rRNA + 5'-deoxyadenosine + L-methionine + 2 oxidized [2Fe-2S]-[ferredoxin] + S-adenosyl-L-homocysteine. The enzyme catalyses adenosine(37) in tRNA + 2 reduced [2Fe-2S]-[ferredoxin] + 2 S-adenosyl-L-methionine = 2-methyladenosine(37) in tRNA + 5'-deoxyadenosine + L-methionine + 2 oxidized [2Fe-2S]-[ferredoxin] + S-adenosyl-L-homocysteine. Functionally, specifically methylates position 2 of adenine 2503 in 23S rRNA and position 2 of adenine 37 in tRNAs. The polypeptide is Probable dual-specificity RNA methyltransferase RlmN (Lachnospira eligens (strain ATCC 27750 / DSM 3376 / VPI C15-48 / C15-B4) (Eubacterium eligens)).